The primary structure comprises 510 residues: Bifunctional purine biosynthesis protein PurH (510 aa).

The region spanning 1-144 (MSKRALISVT…KNYKDVIVVV (144 aa)) is the MGS-like domain.

Belongs to the PurH family.

It carries out the reaction (6R)-10-formyltetrahydrofolate + 5-amino-1-(5-phospho-beta-D-ribosyl)imidazole-4-carboxamide = 5-formamido-1-(5-phospho-D-ribosyl)imidazole-4-carboxamide + (6S)-5,6,7,8-tetrahydrofolate. It catalyses the reaction IMP + H2O = 5-formamido-1-(5-phospho-D-ribosyl)imidazole-4-carboxamide. The protein operates within purine metabolism; IMP biosynthesis via de novo pathway; 5-formamido-1-(5-phospho-D-ribosyl)imidazole-4-carboxamide from 5-amino-1-(5-phospho-D-ribosyl)imidazole-4-carboxamide (10-formyl THF route): step 1/1. It participates in purine metabolism; IMP biosynthesis via de novo pathway; IMP from 5-formamido-1-(5-phospho-D-ribosyl)imidazole-4-carboxamide: step 1/1. This is Bifunctional purine biosynthesis protein PurH from Clostridioides difficile (strain 630) (Peptoclostridium difficile).